We begin with the raw amino-acid sequence, 222 residues long: 2-hydroxypent-2,4-dienoate hydratase (222 aa).

It belongs to the hydratase/decarboxylase family.

The protein operates within aromatic compound metabolism; benzoate degradation via hydroxylation. Conversion of 2-hydroxypent-2,4-dienoate into 4-hydroxy-2-oxopentanoate. This Pseudomonas putida (Arthrobacter siderocapsulatus) protein is 2-hydroxypent-2,4-dienoate hydratase (xylJ).